The primary structure comprises 93 residues: MNIKLINIGFGNIVSASRIVAIVSPESAPIKRIIQEARERGMLIDATYGRRTRAVIVTDSDHIILSAVQPETVAHRLNSKDANKEVEASAEIE.

Belongs to the RemA family.

This Alkaliphilus metalliredigens (strain QYMF) protein is Putative regulatory protein Amet_2791.